A 550-amino-acid polypeptide reads, in one-letter code: Dihydroxy-acid dehydratase (550 aa).

Residue Asp-78 coordinates Mg(2+). Residue Cys-119 coordinates [2Fe-2S] cluster. Mg(2+) contacts are provided by Asp-120 and Lys-121. The residue at position 121 (Lys-121) is an N6-carboxylysine. Position 191 (Cys-191) interacts with [2Fe-2S] cluster. Glu-440 is a binding site for Mg(2+). Catalysis depends on Ser-466, which acts as the Proton acceptor.

Belongs to the IlvD/Edd family. As to quaternary structure, homodimer. The cofactor is [2Fe-2S] cluster. Mg(2+) is required as a cofactor.

It carries out the reaction (2R)-2,3-dihydroxy-3-methylbutanoate = 3-methyl-2-oxobutanoate + H2O. The catalysed reaction is (2R,3R)-2,3-dihydroxy-3-methylpentanoate = (S)-3-methyl-2-oxopentanoate + H2O. The protein operates within amino-acid biosynthesis; L-isoleucine biosynthesis; L-isoleucine from 2-oxobutanoate: step 3/4. Its pathway is amino-acid biosynthesis; L-valine biosynthesis; L-valine from pyruvate: step 3/4. Its function is as follows. Functions in the biosynthesis of branched-chain amino acids. Catalyzes the dehydration of (2R,3R)-2,3-dihydroxy-3-methylpentanoate (2,3-dihydroxy-3-methylvalerate) into 2-oxo-3-methylpentanoate (2-oxo-3-methylvalerate) and of (2R)-2,3-dihydroxy-3-methylbutanoate (2,3-dihydroxyisovalerate) into 2-oxo-3-methylbutanoate (2-oxoisovalerate), the penultimate precursor to L-isoleucine and L-valine, respectively. The protein is Dihydroxy-acid dehydratase of Methanococcus maripaludis (strain C5 / ATCC BAA-1333).